The following is a 157-amino-acid chain: Small ribosomal subunit protein uS7 (157 aa).

This sequence belongs to the universal ribosomal protein uS7 family. In terms of assembly, part of the 30S ribosomal subunit. Contacts proteins S9 and S11.

Functionally, one of the primary rRNA binding proteins, it binds directly to 16S rRNA where it nucleates assembly of the head domain of the 30S subunit. Is located at the subunit interface close to the decoding center, probably blocks exit of the E-site tRNA. The protein is Small ribosomal subunit protein uS7 of Rhodopirellula baltica (strain DSM 10527 / NCIMB 13988 / SH1).